Reading from the N-terminus, the 153-residue chain is UPF0260 protein Plav_0898 (153 aa).

This sequence belongs to the UPF0260 family.

The polypeptide is UPF0260 protein Plav_0898 (Parvibaculum lavamentivorans (strain DS-1 / DSM 13023 / NCIMB 13966)).